A 292-amino-acid polypeptide reads, in one-letter code: MPELPEVETVRRGLEQKLKNFIIKRVEICRESTVAYPIDKIDFIEGLQNSLLYKWNRRGKYLIAELKKTVSNNNDANEISFVENGVLVVHLRMTGYFTFNNTLTNPCKHTRIRLFDNNNNELRYIDVRSFGQMWWVRDGLSPNNIIKGLGTLGPEPFSESFNVNYLKKVISNKTRSIKSILLDQTIIAGIGNIYADESLYSAGISPFREARTINKNEIKRLRRAVVDVLKKSIGAGGTTFSDFRDLEGENGNFGLQTNVYRRTGKKCRQCKNLIERQKISGRSTHWCRKCQK.

The active-site Schiff-base intermediate with DNA is the Pro2. Glu3 acts as the Proton donor in catalysis. The active-site Proton donor; for beta-elimination activity is Lys60. DNA is bound by residues His109, Arg128, and Lys173. An FPG-type zinc finger spans residues 258–292 (NVYRRTGKKCRQCKNLIERQKISGRSTHWCRKCQK). Arg282 serves as the catalytic Proton donor; for delta-elimination activity.

It belongs to the FPG family. In terms of assembly, monomer. The cofactor is Zn(2+).

The catalysed reaction is Hydrolysis of DNA containing ring-opened 7-methylguanine residues, releasing 2,6-diamino-4-hydroxy-5-(N-methyl)formamidopyrimidine.. It carries out the reaction 2'-deoxyribonucleotide-(2'-deoxyribose 5'-phosphate)-2'-deoxyribonucleotide-DNA = a 3'-end 2'-deoxyribonucleotide-(2,3-dehydro-2,3-deoxyribose 5'-phosphate)-DNA + a 5'-end 5'-phospho-2'-deoxyribonucleoside-DNA + H(+). In terms of biological role, involved in base excision repair of DNA damaged by oxidation or by mutagenic agents. Acts as a DNA glycosylase that recognizes and removes damaged bases. Has a preference for oxidized purines, such as 7,8-dihydro-8-oxoguanine (8-oxoG). Has AP (apurinic/apyrimidinic) lyase activity and introduces nicks in the DNA strand. Cleaves the DNA backbone by beta-delta elimination to generate a single-strand break at the site of the removed base with both 3'- and 5'-phosphates. The sequence is that of Formamidopyrimidine-DNA glycosylase from Prochlorococcus marinus subsp. pastoris (strain CCMP1986 / NIES-2087 / MED4).